The following is a 621-amino-acid chain: 1,4-alpha-glucan branching enzyme GlgB (621 aa).

Residue aspartate 302 is the Nucleophile of the active site. Residue glutamate 355 is the Proton donor of the active site.

This sequence belongs to the glycosyl hydrolase 13 family. GlgB subfamily. As to quaternary structure, monomer.

It catalyses the reaction Transfers a segment of a (1-&gt;4)-alpha-D-glucan chain to a primary hydroxy group in a similar glucan chain.. Its pathway is glycan biosynthesis; glycogen biosynthesis. Catalyzes the formation of the alpha-1,6-glucosidic linkages in glycogen by scission of a 1,4-alpha-linked oligosaccharide from growing alpha-1,4-glucan chains and the subsequent attachment of the oligosaccharide to the alpha-1,6 position. This chain is 1,4-alpha-glucan branching enzyme GlgB, found in Dechloromonas aromatica (strain RCB).